We begin with the raw amino-acid sequence, 257 residues long: Protein THYLAKOID ASSEMBLY 8-like, chloroplastic (257 aa).

A chloroplast-targeting transit peptide spans 1-55; the sequence is MTAIRVCSRKFPTFASIFFQNITRNPSIHRISFSNLKPKTLLHPIPPKPFTVFVS. 2 PPR repeats span residues 142-176 and 177-211; these read DVFM…NLFP and DSQT…PDPP.

It belongs to the PPR family. P subfamily.

It is found in the plastid. It localises to the chloroplast. In terms of biological role, binds weakly to specific single strand RNA (ssRNA). The protein is Protein THYLAKOID ASSEMBLY 8-like, chloroplastic of Arabidopsis thaliana (Mouse-ear cress).